We begin with the raw amino-acid sequence, 54 residues long: Large ribosomal subunit protein bL33B (54 aa).

The protein belongs to the bacterial ribosomal protein bL33 family.

In Mycobacterium sp. (strain KMS), this protein is Large ribosomal subunit protein bL33B.